We begin with the raw amino-acid sequence, 997 residues long: Signal peptide, CUB and EGF-like domain-containing protein 2 (997 aa).

Positions Met-1–Ala-28 are cleaved as a signal peptide. The region spanning Asp-43–Glu-83 is the EGF-like 1; calcium-binding domain. 8 disulfide bridges follow: Cys-47–Cys-60, Cys-54–Cys-69, Cys-71–Cys-82, Cys-88–Cys-100, Cys-96–Cys-109, Cys-111–Cys-124, Cys-130–Cys-141, and Cys-137–Cys-150. The EGF-like 2; calcium-binding domain occupies Asp-84 to Leu-125. Positions Asp-126–Gln-162 constitute an EGF-like 3; calcium-binding domain. EGF-like domains are found at residues Cys-175–Cys-211, Cys-215–Cys-250, and Cys-284–Cys-319. Residues Asp-321 to Gln-361 form the EGF-like 7; calcium-binding domain. Cystine bridges form between Cys-325/Cys-336, Cys-332/Cys-345, Cys-347/Cys-360, Cys-366/Cys-376, Cys-372/Cys-385, Cys-387/Cys-399, Cys-405/Cys-416, Cys-412/Cys-425, and Cys-427/Cys-440. The region spanning Asp-362–Gly-400 is the EGF-like 8; calcium-binding domain. One can recognise an EGF-like 9; calcium-binding domain in the interval Asp-401 to Val-441. N-linked (GlcNAc...) asparagine glycosylation occurs at Asn-657. Cysteines 807 and 833 form a disulfide. Residues Cys-807–Tyr-919 form the CUB domain. The tract at residues Ile-845–Leu-854 is interaction with the cholesterol-anchor of SHH. Cys-860 and Cys-881 are joined by a disulfide.

In terms of assembly, interacts with SHH via the cholesterol anchor of the dually lipid-modified SHH (ShhNp). Interacts with PTCH1. Forms homooligomers and heterooligomers with SCUBE1 and SCUBE3. Interacts with VEGFR2. N-glycosylated. In terms of tissue distribution, expressed in adult heart, lung and testis.

The protein resides in the secreted. The protein localises to the cell surface. Its function is as follows. Lipid-binding protein required for SHH long-range signaling by binding to the dually lipid-modified SHH (ShhNp) and by promoting ShhNp mobilization, solubilization and release from the cell membrane. Acts by enhancing the proteolytic processing (shedding) of the lipid-modified N- and C- terminal of ShhNp at the cell surface. Synergizes with DISP1 to cause an increase in SHH secretion. Probable cell surface coreceptor for VEGFR2 involved in VEGFR2-mediated angiogenesis. The protein is Signal peptide, CUB and EGF-like domain-containing protein 2 of Mus musculus (Mouse).